The primary structure comprises 694 residues: Glycine--tRNA ligase beta subunit (694 aa).

It belongs to the class-II aminoacyl-tRNA synthetase family. In terms of assembly, tetramer of two alpha and two beta subunits.

The protein localises to the cytoplasm. It carries out the reaction tRNA(Gly) + glycine + ATP = glycyl-tRNA(Gly) + AMP + diphosphate. This Lactiplantibacillus plantarum (strain ATCC BAA-793 / NCIMB 8826 / WCFS1) (Lactobacillus plantarum) protein is Glycine--tRNA ligase beta subunit.